The following is a 172-amino-acid chain: Protein YdeJ (172 aa).

The protein belongs to the CinA family.

Its function is as follows. Does not have nicotinamide-nucleotide (NMN) amidohydrolase activity. This Escherichia coli (strain K12) protein is Protein YdeJ (ydeJ).